The following is a 524-amino-acid chain: Cytochrome P450 monooxygenase oblB (524 aa).

A run of 3 helical transmembrane segments spans residues 18 to 38 (ILNAGIAIAGLSAAYAIGLVI), 225 to 245 (FHSGVVTLPLFMGLPWLIHLI), and 322 to 342 (VLIGSGTMTTAGTMCFLVYYI). Cys466 contributes to the heme binding site.

Belongs to the cytochrome P450 family. The cofactor is heme.

It is found in the membrane. The catalysed reaction is ophiobolin F + 4 reduced [NADPH--hemoprotein reductase] + 4 O2 = ophiobolin C + 4 oxidized [NADPH--hemoprotein reductase] + 6 H2O + 4 H(+). It participates in secondary metabolite biosynthesis; terpenoid biosynthesis. Functionally, cytochrome P450 monooxygenase; part of the gene cluster that mediates the biosynthesis of the sesterterpenes ophiobolins, fungal phytotoxins with potential anti-cancer activities. The first step of the pathway is performed by the sesterterpene synthase oblA that possesses both prenyl transferase and terpene cyclase activity, converting isopentenyl diphosphate and dimethylallyl diphosphate into geranylfarnesyl diphosphate (GFPP) and further converting GFPP into ophiobolin F, respectively. Other sesterterpenoids (C(25) terpenoids) are found as minor products of oblA. The cytochrome P450 monooxygenase oblB then catalyzes a four-step oxidative transformation of ophiobolin F to yield ophiobolin C. The FAD-dependent oxidoreductase oblC might be involved in a later oxidation step that produces ophiobolin A. This Cochliobolus heterostrophus (strain C5 / ATCC 48332 / race O) (Southern corn leaf blight fungus) protein is Cytochrome P450 monooxygenase oblB.